The primary structure comprises 1134 residues: RNA-binding protein NAB6 (1134 aa).

N-acetylserine is present on Ser-2. Disordered stretches follow at residues 112–133 (RPVS…NTNN), 151–173 (RNNN…RNNS), and 464–491 (SVPS…SGIT). 2 stretches are compositionally biased toward low complexity: residues 115 to 133 (SNHN…NTNN) and 151 to 164 (RNNN…HNNN). Ser-464 and Ser-467 each carry phosphoserine. Over residues 471–489 (GNNNDSNNNGNNNKSNMSG) the composition is skewed to low complexity. The 74-residue stretch at 653 to 726 (RTIYIGNINP…NMLRVGWGHY (74 aa)) folds into the RRM domain. Disordered regions lie at residues 918-959 (LDAH…FGGL) and 1043-1092 (NYRS…GSFA). Polar residues predominate over residues 1057–1081 (STLSYNHSKNNETPMQDIFTNGETA). The segment covering 1083–1092 (NRKKKRGSFA) has biased composition (basic residues).

The protein resides in the cytoplasm. In terms of biological role, RNA-binding protein that associates with mRNAs encoding cell wall proteins. The sequence is that of RNA-binding protein NAB6 (NAB6) from Saccharomyces cerevisiae (strain ATCC 204508 / S288c) (Baker's yeast).